We begin with the raw amino-acid sequence, 946 residues long: Serine/arginine repetitive matrix protein 1 (946 aa).

N-acetylmethionine is present on Met-1. The tract at residues 1-151 is necessary for DNA and RNA-binding; the sequence is MDAGFFRGTS…ASLKKQDEDK (151 aa). Residues 1-156 are necessary for mRNA 3'-end cleavage and cytoplasmic accumulation; it reads MDAGFFRGTS…QDEDKDKRDK (156 aa). Arg-7 carries the citrulline modification. Residues 27-126 enclose the PWI domain; the sequence is QLKFAECLEK…AGIPSAFLEL (100 aa). A Glycyl lysine isopeptide (Lys-Gly) (interchain with G-Cter in SUMO2) cross-link involves residue Lys-127. Lys-140 is modified (N6-acetyllysine). Basic and acidic residues predominate over residues 142–170; sequence ASLKKQDEDKDKRDKEEKESSREKRERSR. Residues 142–946 form a disordered region; the sequence is ASLKKQDEDK…MRKAQVSPQS (805 aa). A compositionally biased stretch (basic residues) spans 171 to 207; sequence SPRRRKSRSPSPRRRSSPVRRERKRSHSRSPRHRTKS. Residues 214 to 234 are compositionally biased toward basic and acidic residues; it reads PEKKEKSPELPEPSVRMKDSS. A phosphoserine mark is found at Ser-220 and Ser-227. Residue Lys-231 forms a Glycyl lysine isopeptide (Lys-Gly) (interchain with G-Cter in SUMO1); alternate linkage. A Glycyl lysine isopeptide (Lys-Gly) (interchain with G-Cter in SUMO2); alternate cross-link involves residue Lys-231. Residues Ser-234 and Ser-240 each carry the phosphoserine modification. Position 241 is a phosphothreonine (Thr-241). The span at 246–273 shows a compositional bias: basic and acidic residues; that stretch reads KAPKPEPVPEPKEPSPEKNSKKEKEKTR. Lys-249 participates in a covalent cross-link: Glycyl lysine isopeptide (Lys-Gly) (interchain with G-Cter in SUMO2). Phosphoserine is present on Ser-260. Composition is skewed to basic residues over residues 274–327 and 334–349; these read PRSR…RTPP and PRHR…RRRS. Positions 298–707 are necessary for speckles and matrix localization; that stretch reads RRHRSRSRSY…NKRHSPSPRP (410 aa). The segment covering 350–366 has biased composition (low complexity); sequence SASLSGSSSSSSSSRSR. Phosphoserine occurs at positions 387, 389, 391, and 400. At Thr-404 the chain carries Phosphothreonine. Ser-412 is modified (phosphoserine). Position 414 is a phosphothreonine (Thr-414). A phosphoserine mark is found at Ser-418, Ser-427, Ser-429, and Ser-434. Residues 426–436 are compositionally biased toward polar residues; that stretch reads VSVSPGRTSGK. Lys-445 is covalently cross-linked (Glycyl lysine isopeptide (Lys-Gly) (interchain with G-Cter in SUMO2)). Phosphoserine is present on residues Ser-448 and Ser-450. Residue Lys-457 forms a Glycyl lysine isopeptide (Lys-Gly) (interchain with G-Cter in SUMO2) linkage. Ser-461 and Ser-463 each carry phosphoserine. A Glycyl lysine isopeptide (Lys-Gly) (interchain with G-Cter in SUMO2) cross-link involves residue Lys-470. Position 476 is a phosphoserine (Ser-476). Positions 476–499 are enriched in low complexity; that stretch reads SVQQRRQYRRQNQQSSSDSGSSST. Residues 501–516 show a composition bias toward basic and acidic residues; it reads EDERPKRSHVKNGEVG. Phosphoserine is present on residues Ser-522, Ser-524, Ser-526, Ser-528, Ser-530, Ser-561, Ser-563, Ser-572, and Ser-574. Residues 555-572 are compositionally biased toward basic residues; that stretch reads SSRRRRSPSPPPARRRRS. The span at 574–585 shows a compositional bias: pro residues; that stretch reads SPAPPPPPPPPP. Basic residues predominate over residues 586 to 611; sequence PRRRRSPTPPPRRRTPSPPPRRRSPS. Phosphothreonine is present on residues Thr-593 and Thr-600. Position 602 is a phosphoserine (Ser-602). Over residues 612-624 the composition is skewed to low complexity; sequence PRRYSPPIQRRYS. Tyr-615 bears the Phosphotyrosine mark. A phosphoserine mark is found at Ser-616, Ser-624, and Ser-626. Thr-633 is subject to Phosphothreonine. Phosphoserine is present on residues Ser-635, Ser-645, Ser-647, Ser-655, and Ser-657. The segment covering 640-655 has biased composition (basic residues); it reads PKRRASPSPPPKRRVS. Basic residues predominate over residues 668 to 682; it reads TKRRSPSLSSKHRKG. A compositionally biased stretch (pro residues) spans 704–718; it reads SPRPRAPQTSSPPPV. 6 positions are modified to phosphoserine: Ser-713, Ser-714, Ser-723, Ser-725, Ser-731, and Ser-733. Polar residues predominate over residues 724 to 736; that stretch reads ASPQGRQSPSPST. At Thr-736 the chain carries Phosphothreonine. Ser-779, Ser-781, Ser-789, Ser-793, Ser-795, Ser-797, Ser-810, Ser-814, Ser-816, and Ser-818 each carry phosphoserine. Residues 779-800 are compositionally biased toward low complexity; the sequence is SPSPQSVRRVSSSRSVSGSPEP. At Thr-819 the chain carries Phosphothreonine. Residues Ser-822 and Ser-832 each carry the phosphoserine modification. The span at 833–842 shows a compositional bias: polar residues; sequence PTPSLSPARN. At Thr-834 the chain carries Phosphothreonine. Phosphoserine occurs at positions 836, 838, and 843. Over residues 850 to 875 the composition is skewed to basic residues; sequence KKKKKKKDKKHKKDKKHKKHKKHKKE. The segment covering 878–907 has biased composition (low complexity); sequence VTIATPATAAPAAVSAATTTSAQEEPAAAP. At Thr-913 the chain carries Phosphothreonine. The residue at position 915 (Ser-915) is a Phosphoserine. The segment covering 924–934 has biased composition (basic and acidic residues); it reads DLERHLREKAL. Ser-943 bears the Phosphoserine mark.

It belongs to the splicing factor SR family. Identified in the spliceosome C complex. Found in a pre-mRNA splicing complex with SFRS4, SFRS5, SNRP70, SNRPA1, SRRM1 and SRRM2. Component of the minor spliceosome, which splices U12-type introns. Found in a pre-mRNA exonic splicing enhancer (ESE) complex with SNRP70, SNRPA1, SRRM1 and TRA2B/SFRS10. Found in a mRNA splicing-dependent exon junction complex (EJC) with DEK, PRPF8, NCBP1, RBM8A, RNPS1, SRRM1 and ALYREF/THOC4. Interacts with DDX39B, CPSF1, RBM8A, RNPS1, and ALYREF/THOC4. Seems to be a compound of RNA export complexes that are released from speckles in a ATP-dependent manner. In terms of processing, citrullinated by PADI4. Phosphorylated on multiple serine and threonine residues by DYRK3 during the G2-to-M transition, after the nuclear-envelope breakdown. Phosphorylation by DYRK3 promotes disassembly of nuclear speckles.

The protein localises to the nucleus matrix. It localises to the nucleus speckle. Functionally, part of pre- and post-splicing multiprotein mRNP complexes. As a component of the minor spliceosome, involved in the splicing of U12-type introns in pre-mRNAs. Involved in numerous pre-mRNA processing events. Promotes constitutive and exonic splicing enhancer (ESE)-dependent splicing activation by bridging together sequence-specific (SR family proteins, SFRS4, SFRS5 and TRA2B/SFRS10) and basal snRNP (SNRP70 and SNRPA1) factors of the spliceosome. Stimulates mRNA 3'-end cleavage independently of the formation of an exon junction complex. Binds both pre-mRNA and spliced mRNA 20-25 nt upstream of exon-exon junctions. Binds RNA and DNA with low sequence specificity and has similar preference for either double- or single-stranded nucleic acid substrates. The protein is Serine/arginine repetitive matrix protein 1 (Srrm1) of Mus musculus (Mouse).